The sequence spans 284 residues: MEMO1 family protein YG5714_2180 (284 aa).

It belongs to the MEMO1 family.

This chain is MEMO1 family protein YG5714_2180, found in Saccharolobus islandicus (strain Y.G.57.14 / Yellowstone #1) (Sulfolobus islandicus).